The chain runs to 299 residues: Protein FAM228A (299 aa).

A disordered region spans residues 135–201 (AKGTSYQHGR…GRNRYKGASS (67 aa)). A compositionally biased stretch (basic and acidic residues) spans 146–159 (KTHDTQKEAKETEK). Serine 264 is modified (phosphoserine).

This sequence belongs to the FAM228 family.

This is Protein FAM228A (Fam228a) from Mus musculus (Mouse).